A 25-amino-acid polypeptide reads, in one-letter code: Antifungal protein 1 (25 aa).

Residues 1–25 are disordered; sequence QSERFEQQMQGQDFSHDERFLSQAA. The segment covering 14–25 has biased composition (basic and acidic residues); it reads FSHDERFLSQAA.

This sequence belongs to the 2S seed storage albumins family. In terms of tissue distribution, expressed in seed (at protein level). Not detected in pulp, stems and leaves.

In terms of biological role, has strong antifungal activity against T.harzianum, F.oxysporum and A.fumigatus with IC(50) values of 32 ug/ml, 34 ug/ml and 40 ug/ml, restectively. Lacks antifungal activity against R.solani, P.brasiliensis and C.albicans. This is Antifungal protein 1 from Passiflora edulis (Passion fruit).